Here is a 585-residue protein sequence, read N- to C-terminus: Formate--tetrahydrofolate ligase (585 aa).

Residue 74–81 participates in ATP binding; sequence TPLGEGKT.

Belongs to the formate--tetrahydrofolate ligase family.

The catalysed reaction is (6S)-5,6,7,8-tetrahydrofolate + formate + ATP = (6R)-10-formyltetrahydrofolate + ADP + phosphate. The protein operates within one-carbon metabolism; tetrahydrofolate interconversion. The chain is Formate--tetrahydrofolate ligase from Yersinia enterocolitica serotype O:8 / biotype 1B (strain NCTC 13174 / 8081).